The primary structure comprises 2124 residues: Genome polyprotein (2124 aa).

Gly-2 is lipidated: N-myristoyl glycine; by host. A host EIF4E binding region spans residues 873 to 880 (VARDLLLI). An SF3 helicase domain is found at 1102 to 1264 (VQIATYFRNF…SAATKNGKLD (163 aa)). Residue 1130–1137 (GKPGVGKS) coordinates ATP. Over residues 1415–1437 (DKPKEEEEEPEEKKEKKTEESKE) the composition is skewed to basic and acidic residues. A disordered region spans residues 1415-1446 (DKPKEEEEEPEEKKEKKTEESKEAAGPYNGPT). Tyr-1442 carries the post-translational modification O-(5'-phospho-RNA)-tyrosine. One can recognise a Peptidase C3 domain in the interval 1459-1648 (SPLMDMEKKI…VGTRLTARMI (190 aa)). Residues His-1501, Asp-1535, and Cys-1612 each act as for protease 3C activity in the active site. The RdRp catalytic domain occupies 1893–2011 (PYLYDFDYSN…ASKFELDLVM (119 aa)). Catalysis depends on for RdRp activity residues Asp-1899 and Asp-1997.

It belongs to the picornaviruses polyprotein family. Interacts with host EIF4E. As to quaternary structure, interacts with host IFIH1/MDA5; this interaction inhibits the induction of the IFN-beta signal pathway. Post-translationally, specific enzymatic cleavages by the viral protease in vivo yield a variety of precursors and mature proteins. The polyprotein seems to be cotranslationally cleaved at the 2A/2B junction by a ribosomal skip from one codon to the next without formation of a peptide bond. This process would release the P1-2A peptide from the translational complex. In terms of processing, during virion maturation, immature virions are rendered infectious following cleavage of VP0 into VP4 and VP2. This maturation seems to be an autocatalytic event triggered by the presence of RNA in the capsid and is followed by a conformational change of the particle. Myristoylation is required during RNA encapsidation and formation of the mature virus particle. Post-translationally, uridylylated by the polymerase and is covalently linked to the 5'-end of genomic RNA. This uridylylated form acts as a nucleotide-peptide primer for the polymerase.

It localises to the virion. Its subcellular location is the host cytoplasm. The protein resides in the host nucleus. The protein localises to the host nucleolus. It is found in the host cytoplasmic vesicle membrane. The enzyme catalyses RNA(n) + a ribonucleoside 5'-triphosphate = RNA(n+1) + diphosphate. It catalyses the reaction ATP + H2O = ADP + phosphate + H(+). It carries out the reaction Selective cleavage of Gln-|-Gly bond in the poliovirus polyprotein. In other picornavirus reactions Glu may be substituted for Gln, and Ser or Thr for Gly.. In terms of biological role, forms an icosahedral capsid of pseudo T=3 symmetry with capsid proteins VP2 and VP3. Together they form an icosahedral capsid composed of 60 copies of each VP1, VP2, and VP3, with a diameter of approximately 300 Angstroms. VP4 lies on the inner surface of the protein shell formed by VP1, VP2 and VP3. All the three latter proteins contain a beta-sheet structure called beta-barrel jelly roll. VP1 is situated at the 12 fivefold axes, whereas VP2 and VP3 are located at the quasi-sixfold axes. Its function is as follows. Lies on the inner surface of the capsid shell. After binding to the host receptor, the capsid undergoes conformational changes. Capsid protein VP4 is released, capsid protein VP1 N-terminus is externalized, and together, they shape a pore in the host membrane through which the viral genome is translocated into the host cell cytoplasm. After genome has been released, the channel shrinks. VP0 precursor is a component of immature procapsids. Functionally, involved in host translation shutoff by inhibiting cap-dependent mRNA translation. Nuclear localization is required for this function. The resulting inhibition of cellular protein synthesis serves to ensure maximal viral gene expression and to evade host immune response. In terms of biological role, affects membrane integrity and causes an increase in membrane permeability. Its function is as follows. Associates with and induces structural rearrangements of intracellular membranes. It displays RNA-binding, nucleotide binding and NTPase activities. Interacts with IFIH1/MDA5 to inhibit the induction of the IFN-beta signal pathway. Serves as membrane anchor via its hydrophobic domain. Functionally, forms a primer, VPg-pU, which is utilized by the polymerase for the initiation of RNA chains. In terms of biological role, cysteine protease that generates mature viral proteins from the precursor polyprotein. In addition to its proteolytic activity, it binds to viral RNA, and thus influences viral genome replication. RNA and substrate cooperatively bind to the protease. Cleaves host PABP1, this cleavage is important for viral replication. Cleaves host TANK and disrupts the TANK-TBK1-IKKepsilon-IRF3 complex, thereby inhibiting the induction of the IFN-beta signal pathway. Its function is as follows. Replicates the genomic and antigenomic RNAs by recognizing replications specific signals. Performs VPg uridylylation. The polypeptide is Genome polyprotein (Cosavirus A (isolate Human/Pakistan/0553/-) (HCoSV-A)).